The following is a 221-amino-acid chain: MVMENEEIRYVRRRKQMVENQIARRGINDPFVLGAMGTVPRHLFVSEALMDQAYGDFPLPIGEQQTISQPYIVAEMTQALEPTGNDRVLEIGTGSGYQAAILSRIVSRVYTVERIHSLYIRARALFDRLGYYNIATRYSDGTTGWKAESPFDRIIITAGAPDIPSVLVDQLAVGGRLVAPVGTESVQSLIKLVKEKTGVRSTDLGGCRFVKLIGEHGWKEN.

Residue serine 68 is part of the active site.

This sequence belongs to the methyltransferase superfamily. L-isoaspartyl/D-aspartyl protein methyltransferase family.

It localises to the cytoplasm. The catalysed reaction is [protein]-L-isoaspartate + S-adenosyl-L-methionine = [protein]-L-isoaspartate alpha-methyl ester + S-adenosyl-L-homocysteine. Catalyzes the methyl esterification of L-isoaspartyl residues in peptides and proteins that result from spontaneous decomposition of normal L-aspartyl and L-asparaginyl residues. It plays a role in the repair and/or degradation of damaged proteins. The polypeptide is Protein-L-isoaspartate O-methyltransferase (Desulfosudis oleivorans (strain DSM 6200 / JCM 39069 / Hxd3) (Desulfococcus oleovorans)).